Reading from the N-terminus, the 298-residue chain is UDP-N-acetylenolpyruvoylglucosamine reductase (298 aa).

Residues 26-191 (KTGGEAEYLA…LSATFSLKPG (166 aa)) enclose the FAD-binding PCMH-type domain. The active site involves Arg170. Ser220 serves as the catalytic Proton donor. Glu290 is a catalytic residue.

It belongs to the MurB family. The cofactor is FAD.

Its subcellular location is the cytoplasm. It catalyses the reaction UDP-N-acetyl-alpha-D-muramate + NADP(+) = UDP-N-acetyl-3-O-(1-carboxyvinyl)-alpha-D-glucosamine + NADPH + H(+). It functions in the pathway cell wall biogenesis; peptidoglycan biosynthesis. Functionally, cell wall formation. In Lactobacillus acidophilus (strain ATCC 700396 / NCK56 / N2 / NCFM), this protein is UDP-N-acetylenolpyruvoylglucosamine reductase.